A 371-amino-acid chain; its full sequence is Protease PrtS (371 aa).

A Zn(2+)-binding site is contributed by histidine 169. Glutamate 170 is an active-site residue. 2 residues coordinate Zn(2+): histidine 173 and glutamate 193. Residue histidine 273 is the Proton donor of the active site. Positions 352 to 371 (KEEDKDKGKDEGKDKAETKV) are disordered.

It belongs to the peptidase M4 family. Requires Zn(2+) as cofactor.

It localises to the secreted. With respect to regulation, inhibited by 8 mM 1,10-phenanthroline, but not by EDTA or PMSF. Functionally, metalloprotease involved in the inhibition of insect antibacterial peptides. Reduces the antibacterial activity of G.mellonella hemolymph by 50%. Reduces the antibacterial activity of cecropin A by 80% and completely inhibits cecropin B. The polypeptide is Protease PrtS (Photorhabdus sp. (strain Az29)).